The primary structure comprises 713 residues: Mitochondrial intermediate peptidase (713 aa).

The N-terminal 35 residues, Met1–Arg35, are a transit peptide targeting the mitochondrion. Position 126 is an N6-acetyllysine (Lys126). Residue His495 participates in Zn(2+) binding. Residue Glu496 is part of the active site. Zn(2+) is bound by residues His499 and His502.

The protein belongs to the peptidase M3 family. As to quaternary structure, monomer. The cofactor is Zn(2+).

Its subcellular location is the mitochondrion matrix. It carries out the reaction Release of an N-terminal octapeptide as second stage of processing of some proteins imported into the mitochondrion.. With respect to regulation, activity is divalent cation-dependent. It is stimulated by manganese, magnesium or calcium ions and reversibly inhibited by zinc, cobalt and iron. Functionally, cleaves proteins, imported into the mitochondrion, to their mature size. The polypeptide is Mitochondrial intermediate peptidase (MIPEP) (Homo sapiens (Human)).